Here is a 124-residue protein sequence, read N- to C-terminus: Small ribosomal subunit protein uS10 (124 aa).

Belongs to the universal ribosomal protein uS10 family.

This chain is Small ribosomal subunit protein uS10 (rps20), found in Dictyostelium discoideum (Social amoeba).